A 387-amino-acid polypeptide reads, in one-letter code: Chorismate synthase (387 aa).

NADP(+) contacts are provided by Arg-39 and Arg-45. The segment at 92–113 (PVEEGSEEKRRVSRPRPGHADL) is disordered. Residues 130–132 (RSS), 250–251 (QA), Gly-295, 310–314 (KPIPT), and Arg-336 each bind FMN.

The protein belongs to the chorismate synthase family. As to quaternary structure, homotetramer. The cofactor is FMNH2.

It catalyses the reaction 5-O-(1-carboxyvinyl)-3-phosphoshikimate = chorismate + phosphate. It functions in the pathway metabolic intermediate biosynthesis; chorismate biosynthesis; chorismate from D-erythrose 4-phosphate and phosphoenolpyruvate: step 7/7. Its function is as follows. Catalyzes the anti-1,4-elimination of the C-3 phosphate and the C-6 proR hydrogen from 5-enolpyruvylshikimate-3-phosphate (EPSP) to yield chorismate, which is the branch point compound that serves as the starting substrate for the three terminal pathways of aromatic amino acid biosynthesis. This reaction introduces a second double bond into the aromatic ring system. The chain is Chorismate synthase from Brevibacillus brevis (strain 47 / JCM 6285 / NBRC 100599).